The sequence spans 240 residues: 45 kDa antigen (240 aa).

2 Fibronectin type-III domains span residues 1 to 109 and 110 to 210; these read EFPD…FHTL and ANGT…KSGH.

This chain is 45 kDa antigen, found in Taenia ovis (Sheep tapeworm).